A 414-amino-acid chain; its full sequence is Heterogeneous nuclear ribonucleoprotein F (414 aa).

An N-acetylmethionine modification is found at Met1. Met2 carries the N-acetylmethionine; in Heterogeneous nuclear ribonucleoprotein F, N-terminally processed modification. In terms of domain architecture, RRM 1 spans 11–90 (FVVKLRGLPW…RYIEVFKSHR (80 aa)). A Glycyl lysine isopeptide (Lys-Gly) (interchain with G-Cter in SUMO) cross-link involves residue Lys72. The interaction with RNA stretch occupies residues 81–86 (RYIEVF). Residue Lys87 forms a Glycyl lysine isopeptide (Lys-Gly) (interchain with G-Cter in SUMO2) linkage. Ser104 and Ser161 each carry phosphoserine. One can recognise an RRM 2 domain in the interval 111-188 (GFVRLRGLPF…RYIEVFKSSQ (78 aa)). Lys167 is covalently cross-linked (Glycyl lysine isopeptide (Lys-Gly) (interchain with G-Cter in SUMO2)). Positions 179–184 (RYIEVF) are interaction with RNA. Lys185 is covalently cross-linked (Glycyl lysine isopeptide (Lys-Gly) (interchain with G-Cter in SUMO2)). Ser187, Ser193, and Ser195 each carry phosphoserine. At Lys200 the chain carries N6-acetyllysine; alternate. Lys200 participates in a covalent cross-link: Glycyl lysine isopeptide (Lys-Gly) (interchain with G-Cter in SUMO2); alternate. A Phosphothreonine modification is found at Thr215. Lys224 is modified (N6-acetyllysine; alternate). A Glycyl lysine isopeptide (Lys-Gly) (interchain with G-Cter in SUMO2); alternate cross-link involves residue Lys224. Ser265 is modified (phosphoserine). The region spanning 289–366 (HCVHMRGLPY…IELFLNSTTG (78 aa)) is the RRM 3 domain. An interaction with RNA region spans residues 355–360 (RYIELF).

In terms of assembly, identified in the spliceosome C complex. Interacts with AGO1, AGO2, TBP and TXNL4/DIM1. Post-translationally, sumoylated.

It localises to the nucleus. Its subcellular location is the nucleoplasm. In terms of biological role, component of the heterogeneous nuclear ribonucleoprotein (hnRNP) complexes which provide the substrate for the processing events that pre-mRNAs undergo before becoming functional, translatable mRNAs in the cytoplasm. Plays a role in the regulation of alternative splicing events. Binds G-rich sequences in pre-mRNAs and keeps target RNA in an unfolded state. The chain is Heterogeneous nuclear ribonucleoprotein F (HNRNPF) from Bos taurus (Bovine).